We begin with the raw amino-acid sequence, 142 residues long: MSTFSAKPAEVQHEWFVIDATDKVLGRVASEVALRLRGKHKAIYTPHVDTGDFIVIINASKLKVTGTKNLDKVYYRHSGFPGGITATNFRDMQAKFPGRALEKAVKGMLPKGPLGYAMIKKLKVYGGAEHPHTAQQPKALEI.

It belongs to the universal ribosomal protein uL13 family. As to quaternary structure, part of the 50S ribosomal subunit.

Functionally, this protein is one of the early assembly proteins of the 50S ribosomal subunit, although it is not seen to bind rRNA by itself. It is important during the early stages of 50S assembly. The chain is Large ribosomal subunit protein uL13 from Delftia acidovorans (strain DSM 14801 / SPH-1).